The chain runs to 498 residues: Probable cytosol aminopeptidase (498 aa).

Residues Lys-264 and Asp-269 each contribute to the Mn(2+) site. Lys-276 is a catalytic residue. 3 residues coordinate Mn(2+): Asp-287, Asp-346, and Glu-348. The active site involves Arg-350.

Belongs to the peptidase M17 family. Mn(2+) serves as cofactor.

It localises to the cytoplasm. The catalysed reaction is Release of an N-terminal amino acid, Xaa-|-Yaa-, in which Xaa is preferably Leu, but may be other amino acids including Pro although not Arg or Lys, and Yaa may be Pro. Amino acid amides and methyl esters are also readily hydrolyzed, but rates on arylamides are exceedingly low.. It carries out the reaction Release of an N-terminal amino acid, preferentially leucine, but not glutamic or aspartic acids.. Functionally, presumably involved in the processing and regular turnover of intracellular proteins. Catalyzes the removal of unsubstituted N-terminal amino acids from various peptides. The protein is Probable cytosol aminopeptidase of Xanthobacter autotrophicus (strain ATCC BAA-1158 / Py2).